A 150-amino-acid chain; its full sequence is Small ribosomal subunit protein bS6 (150 aa).

Residues 92–150 (KGINKPAKPKKTFKKTFVARKFSRDDESKTHSTEEPRRANTKSTYKKSTSFSQDNKNKK) form a disordered region. A compositionally biased stretch (basic residues) spans 98 to 109 (AKPKKTFKKTFV). Residues 113–129 (FSRDDESKTHSTEEPRR) are compositionally biased toward basic and acidic residues. Residues 132-141 (TKSTYKKSTS) show a composition bias toward low complexity.

The protein belongs to the bacterial ribosomal protein bS6 family.

Functionally, binds together with bS18 to 16S ribosomal RNA. The polypeptide is Small ribosomal subunit protein bS6 (Mycoplasmopsis pulmonis (strain UAB CTIP) (Mycoplasma pulmonis)).